The primary structure comprises 446 residues: Solute carrier family 52, riboflavin transporter, member 2 (446 aa).

4 helical membrane passes run 14 to 34 (LLVA…WVEL), 47 to 67 (LPSY…VVTL), 79 to 99 (APIQ…APLW), and 104 to 124 (VMAG…LALA). N-linked (GlcNAc...) asparagine glycosylation occurs at N129. 2 helical membrane passes run 147–167 (FFLG…GQGV) and 196–216 (FFGA…GLLL). The interval 228–267 (GSGTGLRGGAPGVEEEEEEEASPLQEPPSQAAGNTPSPDP) is disordered. Residues 229-238 (SGTGLRGGAP) show a composition bias toward gly residues. Over residues 254–263 (PPSQAAGNTP) the composition is skewed to polar residues. The next 5 helical transmembrane spans lie at 278–298 (ACLL…LPAV), 313–333 (LAVV…MGIL), 340–360 (LGGL…LAIL), 367–387 (VGTS…LGVF), and 405–425 (ALLA…VTMF).

Belongs to the riboflavin transporter family.

The protein localises to the cell membrane. It carries out the reaction riboflavin(in) = riboflavin(out). Its activity is regulated as follows. Riboflavin transport is Na(+)-independent but moderately pH-sensitive. Activity is strongly inhibited by riboflavin analogs, such as lumiflavin. Weakly inhibited by flavin adenine dinucleotide (FAD) and flavin mononucleotide (FMN). Functionally, plasma membrane transporter mediating the uptake by cells of the water soluble vitamin B2/riboflavin that plays a key role in biochemical oxidation-reduction reactions of the carbohydrate, lipid, and amino acid metabolism. May also act as a receptor for 4-hydroxybutyrate. Its function is as follows. (Microbial infection) In case of infection by porcine endogenous retrovirus (PERV-A), acts as a cell receptor to retroviral envelopes. This Sus scrofa (Pig) protein is Solute carrier family 52, riboflavin transporter, member 2 (SLC52A2).